The chain runs to 596 residues: Arginine--tRNA ligase (596 aa).

The 'HIGH' region signature appears at Ala128–His138.

The protein belongs to the class-I aminoacyl-tRNA synthetase family. Monomer.

The protein localises to the cytoplasm. The enzyme catalyses tRNA(Arg) + L-arginine + ATP = L-arginyl-tRNA(Arg) + AMP + diphosphate. The sequence is that of Arginine--tRNA ligase from Acinetobacter baylyi (strain ATCC 33305 / BD413 / ADP1).